The sequence spans 163 residues: Cytochrome b6-f complex subunit 4 (163 aa).

Helical transmembrane passes span 36–56 (LLYI…GLAV), 95–115 (LLGV…PFLE), and 131–151 (TVFL…TLPI).

Belongs to the cytochrome b family. PetD subfamily. The 4 large subunits of the cytochrome b6-f complex are cytochrome b6, subunit IV (17 kDa polypeptide, petD), cytochrome f and the Rieske protein, while the 4 small subunits are petG, petL, petM and petN. The complex functions as a dimer.

The protein localises to the plastid. It is found in the chloroplast thylakoid membrane. Component of the cytochrome b6-f complex, which mediates electron transfer between photosystem II (PSII) and photosystem I (PSI), cyclic electron flow around PSI, and state transitions. The polypeptide is Cytochrome b6-f complex subunit 4 (Phalaenopsis aphrodite subsp. formosana (Moth orchid)).